Consider the following 2603-residue polypeptide: Ankyrin repeat domain-containing protein 17 (2603 aa).

Methionine 1 is modified (N-acetylmethionine). 2 stretches are compositionally biased toward low complexity: residues 1 to 34 and 42 to 53; these read MEKATVPVAAATAAEGEGSPPAVAAVAGPPAAAE and SSRARSASSPRG. Residues 1 to 143 are disordered; the sequence is MEKATVPVAA…SFILDQDDLE (143 aa). A phosphoserine mark is found at serine 19 and serine 50. Positions 63–79 are enriched in basic residues; it reads KKKPPQQQHHKAKRNRT. The segment covering 84–94 has biased composition (low complexity); sequence SSSESSSDSDN. The span at 95–111 shows a compositional bias: gly residues; sequence SGGGGGGGGGGGGGGGT. Positions 116–131 are enriched in acidic residues; sequence SEEEEDDDDEEEEVSE. Phosphoserine is present on serine 156. 15 ANK repeats span residues 233–262, 266–295, 300–329, 333–362, 366–395, 400–429, 433–462, 466–495, 499–528, 533–562, 563–592, 596–625, 629–658, 663–692, and 696–725; these read SDNRSLAEACSEGDVNAVRKLLIEGRSVNE, EGESLLCLACSAGYYELAQVLLAMHANVED, GDITPLMAAANGGHVKIVKLLLAHKADVNA, TGNTALTYACAGGYVDVVKVLLESGASIED, NGHTPLMEAGSAGHVEVARLLLENGAGINT, FKESALTLACYKGHLEMVRFLLEAGADQEH, EMHTALMEACMDGHVEVARLLLDSGAQVNM, SFESPLTLAACGGHVELAALLIERGASLEE, EGYTPLMEAAREGHEEMVALLLGQGANINA, TQETALTLACCGGFLEVADFLIKAGADIEL, GCSTPLMEAAQEGHLELVKYLLAAGANVHA, TGDTALTYACENGHTDVADVLLQAGADLEH, GGRTPLMKAARAGHVCTVQFLISKGANVNR, NDHTVLSLACAGGHLAVVELLLAHGADPTH, and DGSTMLIEAAKGGHTSVVCYLLDYPNNLLS. A Glycyl lysine isopeptide (Lys-Gly) (interchain with G-Cter in SUMO2) cross-link involves residue lysine 318. Serine 803 carries the phosphoserine modification. ANK repeat units lie at residues 1082–1111, 1115–1144, 1149–1178, 1182–1211, 1217–1246, 1251–1280, 1284–1313, 1319–1348, 1352–1381, and 1385–1414; these read NHDTALTLACAGGHEELVQTLLERGASIEH, KGFTPLILAATAGHVGVVEILLDNGADIEA, TKDTPLSLACSGGRQEVVELLLARGANKEH, SDYTPLSLAASGGYVNIIKILLNAGAEINS, LGISPLMLAAMNGHTAAVKLLLDMGSDINA, NRNTALTLACFQGRTEVVSLLLDRKANVEH, TGLTPLMEAASGGYAEVGRVLLDKGADVNA, SRDTALTIAADKGHYKFCELLIGRGAHIDV, KGNTPLWLAANGGHLDVVQLLVQAGADVDA, and RKITPLMAAFRKGHVKVVRYLVKEVNQFPS. Residues 1442 to 1526 adopt a coiled-coil conformation; the sequence is VQAKDRQAAE…EKEKLKVEDE (85 aa). Position 1457 is a phosphoserine (serine 1457). 2 disordered regions span residues 1479–1500 and 1517–1717; these read AKREKRKEKRRKKKEEQRRKLE and EKEK…QKRE. A compositionally biased stretch (basic residues) spans 1481 to 1491; it reads REKRKEKRRKK. Low complexity-rich tracts occupy residues 1531-1550, 1602-1611, and 1620-1632; these read TEPPSATTTTTIGISATWTT, ESKSSSTSES, and SSCSDESSNSNSS. Phosphoserine is present on residues serine 1635 and serine 1639. 2 stretches are compositionally biased toward polar residues: residues 1642 to 1652 and 1675 to 1703; these read VVTTTVSSKKQ and LSETISEGTSNSLSTCTKSGPSPLSSPNG. Residues serine 1696, serine 1700, and serine 1709 each carry the phosphoserine modification. The 65-residue stretch at 1725–1789 folds into the KH domain; the sequence is RRSKKVSVPS…ESTRQATQLI (65 aa). Arginine 1874 carries the post-translational modification Asymmetric dimethylarginine. Disordered stretches follow at residues 1906 to 1995, 2011 to 2192, and 2273 to 2332; these read PRLP…PSVR, TTVT…HKNS, and VVSS…YGSV. 2 stretches are compositionally biased toward low complexity: residues 1950–1995 and 2011–2028; these read SNQN…PSVR and TTVTTTASNNNTAPTNAT. Phosphoserine is present on residues serine 2042, serine 2044, serine 2045, serine 2047, serine 2059, and serine 2067. Over residues 2066 to 2078 the composition is skewed to polar residues; the sequence is ASPNKVASSSEQE. Low complexity predominate over residues 2095-2106; it reads SSSSSGSSSAHS. Composition is skewed to polar residues over residues 2107–2127 and 2273–2303; these read NQQQPPGSVSQEPRPPLQQSQ and VVSSQSTPESMLSGKSSYLPNSDPLHQSDTS. Pro residues predominate over residues 2308–2318; sequence FRPPLQRPAPS. Phosphoserine occurs at positions 2373 and 2401. Residues 2381–2423 are disordered; sequence CSSASNDSSAQSVSSGVRAPSPAPSSVPLGSEKPSNVSQDRKV. A compositionally biased stretch (low complexity) spans 2382–2411; sequence SSASNDSSAQSVSSGVRAPSPAPSSVPLGS.

In terms of assembly, interacts (via N-terminus) with NOD2. Interacts with CDK2, MCM3, MCM5, MCM7, CDC6 and PCNA. Interacts with MAVS and IFIH1. Interacts (via the second ankyrin repeat cluster) with DDX58. As to quaternary structure, (Microbial infection) Interacts with enterovirus 71/EV71 capsid protein VP1. Post-translationally, phosphorylated by CDK2. In terms of tissue distribution, ubiquitously expressed.

It is found in the cytoplasm. The protein resides in the nucleus. Could play pivotal roles in cell cycle and DNA regulation. Involved in innate immune defense against viruse by positively regulating the viral dsRNA receptors DDX58 and IFIH1 signaling pathways. Involves in NOD2- and NOD1-mediated responses to bacteria suggesting a role in innate antibacterial immune pathways too. Target of enterovirus 71 which is the major etiological agent of HFMD (hand, foot and mouth disease). Could play a central role for the formation and/or maintenance of the blood vessels of the circulation system. The protein is Ankyrin repeat domain-containing protein 17 (ANKRD17) of Homo sapiens (Human).